A 196-amino-acid polypeptide reads, in one-letter code: Translation initiation factor IF-3 (196 aa).

Belongs to the IF-3 family. In terms of assembly, monomer.

Its subcellular location is the cytoplasm. Its function is as follows. IF-3 binds to the 30S ribosomal subunit and shifts the equilibrium between 70S ribosomes and their 50S and 30S subunits in favor of the free subunits, thus enhancing the availability of 30S subunits on which protein synthesis initiation begins. The sequence is that of Translation initiation factor IF-3 from Wigglesworthia glossinidia brevipalpis.